The chain runs to 78 residues: Large ribosomal subunit protein eL20 (78 aa).

This sequence belongs to the eukaryotic ribosomal protein eL20 family. Part of the 50S ribosomal subunit. Binds 23S rRNA.

In Methanothermobacter thermautotrophicus (strain ATCC 29096 / DSM 1053 / JCM 10044 / NBRC 100330 / Delta H) (Methanobacterium thermoautotrophicum), this protein is Large ribosomal subunit protein eL20.